Consider the following 591-residue polypeptide: Nuclear receptor subfamily 4 group A member 2 (591 aa).

Disordered stretches follow at residues 1–22 (MPCV…SQSY) and 110–133 (SEEM…SSTP). Residues 8–22 (YGSSPQGASPASQSY) show a composition bias toward low complexity. The nuclear receptor DNA-binding region spans 253 to 328 (EGLCAVCGDN…VGMVKEVVRT (76 aa)). 2 NR C4-type zinc fingers span residues 256–276 (CAVC…CEGC) and 292–311 (CLAN…CQYC). A Bipartite nuclear localization signal (NLS1) motif is present at residues 280–307 (FKRTVQKNAKYVCLANKNCPVDKRRRNR). The tract at residues 330–354 (SLKGRRGRLPSKPKSPQEPSPPSPP) is disordered. The Nuclear localization signal (NLS1) motif lies at 331–343 (LKGRRGRLPSKPK). Over residues 345–354 (PQEPSPPSPP) the composition is skewed to pro residues. The NR LBD domain maps to 353-588 (PPVSLISALV…AIIDKLFLDT (236 aa)). Positions 436 to 445 (FLELFVLRLA) match the nuclear export sequence (NES1) motif. The short motif at 561–570 (QGLQRIFYLK) is the nuclear export sequence (NES2) element.

Belongs to the nuclear hormone receptor family.

It localises to the cytoplasm. The protein localises to the nucleus. Its function is as follows. Transcriptional regulator which may play a role in the differentiation and maintenance of meso-diencephalic dopaminergic (mdDA) neurons. This Xenopus tropicalis (Western clawed frog) protein is Nuclear receptor subfamily 4 group A member 2 (nr4a2).